We begin with the raw amino-acid sequence, 400 residues long: Acetate kinase (400 aa).

Position 10 (Asn10) interacts with Mg(2+). Lys17 lines the ATP pocket. Residue Arg91 coordinates substrate. Asp150 acts as the Proton donor/acceptor in catalysis. ATP is bound by residues 210 to 214 (HLGNG), 285 to 287 (DCR), and 333 to 337 (GIGEN). Position 387 (Glu387) interacts with Mg(2+).

It belongs to the acetokinase family. Homodimer. Mg(2+) is required as a cofactor. It depends on Mn(2+) as a cofactor.

The protein localises to the cytoplasm. It catalyses the reaction acetate + ATP = acetyl phosphate + ADP. Its pathway is metabolic intermediate biosynthesis; acetyl-CoA biosynthesis; acetyl-CoA from acetate: step 1/2. Catalyzes the formation of acetyl phosphate from acetate and ATP. Can also catalyze the reverse reaction. This chain is Acetate kinase, found in Photorhabdus laumondii subsp. laumondii (strain DSM 15139 / CIP 105565 / TT01) (Photorhabdus luminescens subsp. laumondii).